A 972-amino-acid chain; its full sequence is FHF complex subunit HOOK-interacting protein 1B (972 aa).

Disordered stretches follow at residues 465-496 (APSP…VPRP), 510-547 (SLSG…AGEL), 573-642 (SAPY…PGSW), and 710-733 (SFTC…NQLP). At serine 467 the chain carries Phosphoserine. The span at 479–490 (GPGSPSVDSSSV) shows a compositional bias: low complexity. Residues serine 510, serine 523, serine 529, and serine 533 each carry the phosphoserine modification. The segment covering 523 to 535 (SPGLSASPASSPG) has biased composition (low complexity). Residues 618-627 (GLAGGAGEGP) are compositionally biased toward gly residues. A phosphoserine mark is found at serine 859 and serine 897.

The protein belongs to the FHIP family. In terms of assembly, component of the FTS/Hook/FHIP complex (FHF complex), composed of AKTIP/FTS, FHIP1B, and one or more members of the Hook family of proteins HOOK1, HOOK2, and HOOK3. The FHF complex associates with the homotypic vesicular sorting complex (the HOPS complex).

Its function is as follows. Component of the FTS/Hook/FHIP complex (FHF complex). The FHF complex may function to promote vesicle trafficking and/or fusion via the homotypic vesicular protein sorting complex (the HOPS complex). FHF complex promotes the distribution of AP-4 complex to the perinuclear area of the cell. The sequence is that of FHF complex subunit HOOK-interacting protein 1B (FHIP1B) from Pongo abelii (Sumatran orangutan).